The primary structure comprises 379 residues: MEGNRDEAEKCVEIAREALNAGNREKAQRFLQKAEKLYPLPSARALLEIIMKNGSTAGNSPHCRKPSGGGDQSKPNCTKDSSSGSGESGKGYTKDQVDGVLSINKCKNYYEVLGVTKDAGDEDLKKAYRKLALKFHPDKNHAPGATDAFKKIGNAYAVLSNPEKRKQYDLTGNEEQACNQQNNGRFNFHRGCEADITPEDLFNIFFGGGFPSGSVHSFSNGRAGYSNQHQHRHSGHEREEERGDGGFSVFIQLMPIIVLILVSLLSQLMVSNPPYSLYPRSGSGQTIKMQTENLGVIYYVNKDFKNEYKGMLLQKVEKSVEEDYVTNIRNNCWKERQQKTDMQYAAKVYHDERLRRKAEALSMDNCKELERLTSIYKGG.

The Cytoplasmic portion of the chain corresponds to 1-244 (MEGNRDEAEK…GHEREEERGD (244 aa)). A disordered region spans residues 55 to 94 (STAGNSPHCRKPSGGGDQSKPNCTKDSSSGSGESGKGYTK). Residues 108–172 (NYYEVLGVTK…EKRKQYDLTG (65 aa)) enclose the J domain. The tract at residues 221-241 (GRAGYSNQHQHRHSGHEREEE) is disordered. The chain crosses the membrane as a helical span at residues 245-265 (GGFSVFIQLMPIIVLILVSLL). Topologically, residues 266–379 (SQLMVSNPPY…ERLTSIYKGG (114 aa)) are lumenal.

This sequence belongs to the DnaJ family. DNAJB12/DNAJB14 subfamily. Interacts (via J domain) with HSPA8/Hsc70. Forms a multiprotein complex, at least composed of DNAJB12, DNAJB14, HSPA8/Hsc70 and SGTA; interaction with DNAJB14 and HSPA8/Hsc70 is direct.

The protein localises to the endoplasmic reticulum membrane. It localises to the nucleus membrane. Its function is as follows. Acts as a co-chaperone with HSPA8/Hsc70; required to promote protein folding and trafficking, prevent aggregation of client proteins, and promote unfolded proteins to endoplasmic reticulum-associated degradation (ERAD) pathway. Acts by determining HSPA8/Hsc70's ATPase and polypeptide-binding activities. Can also act independently of HSPA8/Hsc70: together with DNAJB12, acts as a chaperone that promotes maturation of potassium channels KCND2 and KCNH2 by stabilizing nascent channel subunits and assembling them into tetramers. While stabilization of nascent channel proteins is dependent on HSPA8/Hsc70, the process of oligomerization of channel subunits is independent of HSPA8/Hsc70. When overexpressed, forms membranous structures together with DNAJB12 and HSPA8/Hsc70 within the nucleus; the role of these structures, named DJANGOs, is still unclear. The protein is DnaJ homolog subfamily B member 14 (DNAJB14) of Bos taurus (Bovine).